We begin with the raw amino-acid sequence, 370 residues long: tRNA-specific 2-thiouridylase MnmA (370 aa).

ATP contacts are provided by residues A19–S26 and L45. C113 serves as the catalytic Nucleophile. An intrachain disulfide couples C113 to C209. Residue G137 participates in ATP binding. The tract at residues K159 to Q161 is interaction with tRNA. Residue C209 is the Cysteine persulfide intermediate of the active site.

It belongs to the MnmA/TRMU family.

Its subcellular location is the cytoplasm. The enzyme catalyses S-sulfanyl-L-cysteinyl-[protein] + uridine(34) in tRNA + AH2 + ATP = 2-thiouridine(34) in tRNA + L-cysteinyl-[protein] + A + AMP + diphosphate + H(+). Its function is as follows. Catalyzes the 2-thiolation of uridine at the wobble position (U34) of tRNA, leading to the formation of s(2)U34. This chain is tRNA-specific 2-thiouridylase MnmA, found in Rickettsia conorii (strain ATCC VR-613 / Malish 7).